We begin with the raw amino-acid sequence, 215 residues long: ATP phosphoribosyltransferase (215 aa).

This sequence belongs to the ATP phosphoribosyltransferase family. Short subfamily. In terms of assembly, heteromultimer composed of HisG and HisZ subunits.

The protein localises to the cytoplasm. The catalysed reaction is 1-(5-phospho-beta-D-ribosyl)-ATP + diphosphate = 5-phospho-alpha-D-ribose 1-diphosphate + ATP. Its pathway is amino-acid biosynthesis; L-histidine biosynthesis; L-histidine from 5-phospho-alpha-D-ribose 1-diphosphate: step 1/9. Catalyzes the condensation of ATP and 5-phosphoribose 1-diphosphate to form N'-(5'-phosphoribosyl)-ATP (PR-ATP). Has a crucial role in the pathway because the rate of histidine biosynthesis seems to be controlled primarily by regulation of HisG enzymatic activity. This Gloeothece citriformis (strain PCC 7424) (Cyanothece sp. (strain PCC 7424)) protein is ATP phosphoribosyltransferase.